The chain runs to 341 residues: Dihydroorotate dehydrogenase (quinone) (341 aa).

FMN-binding positions include 61 to 65 and Thr85; that span reads AGLDK. Lys65 is a binding site for substrate. 110-114 is a substrate binding site; it reads NRMGF. The FMN site is built by Asn138 and Asn171. Residue Asn171 coordinates substrate. Ser174 (nucleophile) is an active-site residue. Asn176 is a substrate binding site. FMN contacts are provided by Lys216 and Thr244. Residue 245–246 participates in substrate binding; sequence NT. FMN is bound by residues Gly267, Gly296, and 317–318; that span reads YS.

Belongs to the dihydroorotate dehydrogenase family. Type 2 subfamily. As to quaternary structure, monomer. It depends on FMN as a cofactor.

It localises to the cell membrane. It catalyses the reaction (S)-dihydroorotate + a quinone = orotate + a quinol. It participates in pyrimidine metabolism; UMP biosynthesis via de novo pathway; orotate from (S)-dihydroorotate (quinone route): step 1/1. Functionally, catalyzes the conversion of dihydroorotate to orotate with quinone as electron acceptor. This is Dihydroorotate dehydrogenase (quinone) from Pseudomonas putida (strain W619).